Here is a 254-residue protein sequence, read N- to C-terminus: N-acetylglucosaminyldiphosphoundecaprenol N-acetyl-beta-D-mannosaminyltransferase (254 aa).

Belongs to the glycosyltransferase 26 family. TagA/TarA subfamily.

It carries out the reaction UDP-N-acetyl-alpha-D-mannosamine + N-acetyl-alpha-D-glucosaminyl-di-trans,octa-cis-undecaprenyl diphosphate = N-acetyl-beta-D-mannosaminyl-(1-&gt;4)-N-acetyl-alpha-D-glucosaminyl di-trans,octa-cis-undecaprenyl diphosphate + UDP + H(+). It functions in the pathway cell wall biogenesis; poly(ribitol phosphate) teichoic acid biosynthesis. Its function is as follows. Catalyzes the conversion of GlcNAc-PP-undecaprenol into ManNAc-GlcNAc-PP-undecaprenol, the first committed lipid intermediate in the de novo synthesis of teichoic acid. This is N-acetylglucosaminyldiphosphoundecaprenol N-acetyl-beta-D-mannosaminyltransferase from Staphylococcus aureus (strain NCTC 8325 / PS 47).